Reading from the N-terminus, the 2701-residue chain is Centromere-associated protein E (2701 aa).

Positions A6–M329 constitute a Kinesin motor domain. G86–T93 serves as a coordination point for ATP. Residues N336–R2590 are a coiled coil. Phosphoserine occurs at positions 611 and 2083. A kinetochore-binding domain region spans residues K2126–K2476. Residues S2355–T2376 form a disordered region. S2389 carries the post-translational modification Phosphoserine. Residues Q2508–P2527 are compositionally biased toward polar residues. Disordered stretches follow at residues Q2508 to G2533 and K2588 to Q2701. The globular autoinhibitory domain stretch occupies residues Q2510–C2698. Over residues K2588 to V2600 the composition is skewed to basic and acidic residues. The segment covering T2601–Q2625 has biased composition (polar residues). A compositionally biased stretch (basic and acidic residues) spans C2626–P2640. Phosphoserine is present on residues S2639, S2647, and S2651. The residue at position 2698 (C2698) is a Cysteine methyl ester. A lipid anchor (S-farnesyl cysteine) is attached at C2698. Residues K2699–Q2701 constitute a propeptide, removed in mature form.

Belongs to the TRAFAC class myosin-kinesin ATPase superfamily. Kinesin family. Monomer. Interacts with CENPF. Interacts with BUB1B. Interacts with SEPT7. Interacts with KIF18A. Interacts with PRC1. Interacts with NUF2; this interaction determines kinetochore localization. Interacts with SKAP; this interaction greatly favors SKAP binding to microtubules. Interacts with TRAPPC12. Interacts with CTCF. In terms of processing, the C-terminal inhibitory domain is phosphorylated. Phosphorylation relieves autoinhibition of the kinetochore motor. Sumoylated with SUMO2 and SUMO3. The sumoylation mediates the association to the kinetochore.

The protein localises to the chromosome. The protein resides in the centromere. It is found in the kinetochore. Its subcellular location is the cytoplasm. It localises to the cytoskeleton. The protein localises to the spindle. Functionally, microtubule plus-end-directed kinetochore motor which plays an important role in chromosome congression, microtubule-kinetochore conjugation and spindle assembly checkpoint activation. Drives chromosome congression (alignment of chromosomes at the spindle equator resulting in the formation of the metaphase plate) by mediating the lateral sliding of polar chromosomes along spindle microtubules towards the spindle equator and by aiding the establishment and maintenance of connections between kinetochores and spindle microtubules. The transport of pole-proximal chromosomes towards the spindle equator is favored by microtubule tracks that are detyrosinated. Acts as a processive bi-directional tracker of dynamic microtubule tips; after chromosomes have congressed, continues to play an active role at kinetochores, enhancing their links with dynamic microtubule ends. Suppresses chromosome congression in NDC80-depleted cells and contributes positively to congression only when microtubules are stabilized. Plays an important role in the formation of stable attachments between kinetochores and spindle microtubules The stabilization of kinetochore-microtubule attachment also requires CENPE-dependent localization of other proteins to the kinetochore including BUB1B, MAD1 and MAD2. Plays a role in spindle assembly checkpoint activation (SAC) via its interaction with BUB1B resulting in the activation of its kinase activity, which is important for activating SAC. Necessary for the mitotic checkpoint signal at individual kinetochores to prevent aneuploidy due to single chromosome loss. The protein is Centromere-associated protein E (CENPE) of Homo sapiens (Human).